A 506-amino-acid polypeptide reads, in one-letter code: Aspartic proteinase A1 (506 aa).

An N-terminal signal peptide occupies residues 1-24 (MKIYSRTVAVSLIVSFLLCFSAFA). Residues 25-64 (ERNDGTFRVGLKKLKLDSKNRLAARVESKQEKPLRAYRLG) constitute a propeptide, activation peptide. In terms of domain architecture, Peptidase A1 spans 82 to 503 (YYGEIAIGTP…DFGNEQVGFA (422 aa)). The active site involves aspartate 100. 2 cysteine pairs are disulfide-bonded: cysteine 113/cysteine 119 and cysteine 278/cysteine 282. Aspartate 287 is an active-site residue. The 106-residue stretch at 312-417 (VVSQQCKTVV…NELCERLPSP (106 aa)) folds into the Saposin B-type domain. 4 cysteine pairs are disulfide-bonded: cysteine 317/cysteine 411, cysteine 342/cysteine 383, cysteine 348/cysteine 380, and cysteine 425/cysteine 462. Asparagine 397 is a glycosylation site (N-linked (GlcNAc...) asparagine).

Belongs to the peptidase A1 family. Expressed in roots, leaves, stems, petals, carpels, seed pods and dry seeds.

The protein resides in the vacuole. Functionally, involved in the breakdown of propeptides of storage proteins in protein-storage vacuoles. Possesses aspartic protease activity in vitro. This chain is Aspartic proteinase A1 (APA1), found in Arabidopsis thaliana (Mouse-ear cress).